Reading from the N-terminus, the 267-residue chain is MVKISFQPAVAGIKGDKADKASASAPAPASATEILLTPAREEQLPQHRSKRGSSVGGVCYLSMGMVVLLMGLVFASVYIYRYFFLAQLARDNFFRCGVLYEDSLSSQVRTQMELEEDVKIYLDENYERINVPVPQFGGGDPADIIHDFQRGLTAYHDISLDKCYVIELNTTIVLPPRNFWELLMNVKRGTYLPQTYIIQEEMVVTEHVSDKEALGSFIYHLCNGKDTYRLRRRATRRRINKRGAKNCNAIRHFENTFVVETLICGVV.

Thr-37 is subject to Phosphothreonine. Residues 55–75 traverse the membrane as a helical; Signal-anchor for type II membrane protein segment; the sequence is VGGVCYLSMGMVVLLMGLVFA. The 95-residue stretch at 136–230 folds into the BRICHOS domain; that stretch reads FGGGDPADII…LCNGKDTYRL (95 aa). Cys-163 and Cys-222 are oxidised to a cystine. Asn-169 carries an N-linked (GlcNAc...) asparagine glycan.

This sequence belongs to the ITM2 family. Interacts with BACE1. Interacts with APP. Interacts with STMN2. Type I membrane-bound, as well as soluble, furin has a pre-eminent role in ITM2C proteolytic processing. PCSK7 and PCSK5 may also be involved although to a lesser extent. The soluble form of PCSK7 is incapable of processing ITM2C. Fails to undergo shedding by ADAM10 and intramembrane cleavage by SPPL2B.

Its subcellular location is the lysosome membrane. The protein resides in the cell membrane. Functionally, negative regulator of amyloid-beta peptide production. May inhibit the processing of APP by blocking its access to alpha- and beta-secretase. Binding to the beta-secretase-cleaved APP C-terminal fragment is negligible, suggesting that ITM2C is a poor gamma-secretase cleavage inhibitor. May play a role in TNF-induced cell death and neuronal differentiation. This is Integral membrane protein 2C (ITM2C) from Pongo abelii (Sumatran orangutan).